The following is a 411-amino-acid chain: MSVFTKSAFTMSALPSPNTSQPPSAAPSRRGSFANGLASGQLTPVTDPHIVSINVESVLFDMDGTLINSSPAVVKAWELFAEKYPLDLDDILRSAHGMRTIDVLKKWCKITDPELLASEVIRFETAILNSAEDIAKHSGKAGIEVLPGVAKLLADLGEEADKRDGEEKWAICTSSTYFYAGKAIPIAGLPTPKVFVTADSVTRGKPFPDPYLLGASGCNASPFESLVVEDAPTGIRSGKASGALVLATCTSHEREELERERPDFLVDDLSHVKASWDAATNTFNLIIEQPIDRYTPRPTPDVTPVITPAMSRSNSFSGVGQDRPSVRNTQTIMKGSDDLTGNDSVVGSPAASRPGSPGADDSVEKRAEMEFHRRASQSGQAGVTLDAFRRALAGNAAKRRAQSQGEMSQDE.

The segment covering 14 to 23 (LPSPNTSQPP) has biased composition (polar residues). Positions 14–33 (LPSPNTSQPPSAAPSRRGSF) are disordered. The active-site Nucleophile is D61. Residues D61, D63, and D338 each coordinate Mg(2+). Catalysis depends on D63, which acts as the Proton donor. The interval 296 to 386 (PRPTPDVTPV…QSGQAGVTLD (91 aa)) is disordered. The span at 326–345 (VRNTQTIMKGSDDLTGNDSV) shows a compositional bias: polar residues. Residues 362–373 (SVEKRAEMEFHR) show a composition bias toward basic and acidic residues.

This sequence belongs to the HAD-like hydrolase superfamily. In terms of processing, phosphorylated.

In terms of biological role, probable phosphatase. Required for cell wall integrity and virulence. This chain is Probable phosphatase HAD1, found in Cryptococcus neoformans var. grubii serotype A (strain H99 / ATCC 208821 / CBS 10515 / FGSC 9487) (Filobasidiella neoformans var. grubii).